We begin with the raw amino-acid sequence, 499 residues long: ALBINO3-like protein 1, chloroplastic (499 aa).

The transit peptide at 1–45 (MSSTISLKPTHLILSSFSTGKVLQFRRSRFSHTPSSSSSRYRTLV) directs the protein to the chloroplast. The next 4 helical transmembrane spans lie at 115-135 (LSTV…TVLV), 184-204 (LAGI…PVWI), 263-283 (LAYL…IQIM), and 302-322 (LLPL…SLYW). The tract at residues 378 to 499 (LKIPREKGGE…QQHSHETEKR (122 aa)) is disordered. 3 stretches are compositionally biased toward basic and acidic residues: residues 379–420 (KIPR…RQKA), 430–452 (DKAH…KKTE), and 486–499 (HDTE…TEKR). A coiled-coil region spans residues 397–436 (GERFRLLKEQEAKRRREKEERQKAEAALSNQNTDKAHEQD).

Belongs to the OXA1/ALB3/YidC (TC 2.A.9.2) family. As to quaternary structure, homodimer. Interacts with ALB3. Interacts with STIC2. Highly expressed in green tissues.

Its subcellular location is the plastid. It localises to the chloroplast thylakoid membrane. Functionally, required for the insertion of some light harvesting chlorophyll-binding proteins (LHCP) into the chloroplast thylakoid membrane. Plays a role in the accumulation of some cytochrome b6f components in the thylakoid membrane. Required for the assembly and/or stability of the F(1)F(0) ATP synthase in chloroplast thylakoid membranes. Functions to stabilize or promote assembly of F(1) during its attachment to the membrane-embedded F(0) part. Participates with STIC2 in thylakoid protein targeting. May function with a specific subset of thylakoidal proteins. The protein is ALBINO3-like protein 1, chloroplastic of Arabidopsis thaliana (Mouse-ear cress).